The sequence spans 353 residues: Protein RecA (353 aa).

74-81 contributes to the ATP binding site; sequence GPESSGKT.

Belongs to the RecA family.

It localises to the cytoplasm. Functionally, can catalyze the hydrolysis of ATP in the presence of single-stranded DNA, the ATP-dependent uptake of single-stranded DNA by duplex DNA, and the ATP-dependent hybridization of homologous single-stranded DNAs. It interacts with LexA causing its activation and leading to its autocatalytic cleavage. The sequence is that of Protein RecA from Bordetella bronchiseptica (strain ATCC BAA-588 / NCTC 13252 / RB50) (Alcaligenes bronchisepticus).